Consider the following 29-residue polypeptide: Cytochrome b6-f complex subunit 8 (29 aa).

A helical transmembrane segment spans residues 3–23 (IISLAWAALMVVFTFSLSLVV).

Belongs to the PetN family. In terms of assembly, the 4 large subunits of the cytochrome b6-f complex are cytochrome b6, subunit IV (17 kDa polypeptide, PetD), cytochrome f and the Rieske protein, while the 4 small subunits are PetG, PetL, PetM and PetN. The complex functions as a dimer.

It localises to the plastid. It is found in the chloroplast thylakoid membrane. In terms of biological role, component of the cytochrome b6-f complex, which mediates electron transfer between photosystem II (PSII) and photosystem I (PSI), cyclic electron flow around PSI, and state transitions. This chain is Cytochrome b6-f complex subunit 8, found in Nicotiana tomentosiformis (Tobacco).